The primary structure comprises 727 residues: MSPHQTTGQESDNMTVNGENAQASSQYIQSNEEMTDTIATEKKASAAKAAKDPSRPKRKKAKRACYACQRGHLTCGDERPCQRCIKRGFQDACHDGVRKKAKYLHDAPNEALMAGVGATLYNQRNTAQNNVNASNTSPGAPQQITSPNFYNTQQSPDYNGFPQNKTELQDSTVGPDNYASQSPVSPTYQISQGLSTQGLSPSLPQSTSETPSAANPAPGQFNSTFFDPSDPALFNFDLASMNFGNHYGALEFGMLGHMATGVGDTPPSDSGAQRGSIGQNGSGTFGLTGSSFSESPSNQAPYLFSESGMNDWTQTAPVNRRSMYGSNANLVAGNMSDKPHAFAIESAPANFASPASNESPMMTTSSATFEDTTNSGAFNSRQNVPVSQQRQQPVVSTPQLKQQNLNLGSRRRHKNASSIYDSVKDPYSYTSGFHSLTAFIQRRFSPQKTLRIAKALASIRPSFIATTKTLNRDDLIFMEKCFQRTLWEYEDFINACGTPTIVCRRTGEIAAVGKEFSILTGWKKEVLLGKEPNHNVNTGGSSGLMTGSTSRGSYTPRPYSSEVYNSSATATPRTQPVFLAELLDDDSVIEFYEDFAKLAFGDSRGSVMTTCKLLKYKTKAESDILAGSNGEADAGLNGEATSNETNELNGSHTNGATTNGRGQRRWGKGEIAGEAGMNQLGFRDGKVECSYCWTVKRDVFDIPMLIVMNVSCLFLEPLRSRAMTDIN.

Polar residues predominate over residues 1 to 32 (MSPHQTTGQESDNMTVNGENAQASSQYIQSNE). Positions 1–62 (MSPHQTTGQE…PSRPKRKKAK (62 aa)) are disordered. A compositionally biased stretch (basic and acidic residues) spans 39–55 (ATEKKASAAKAAKDPSR). A DNA-binding region (zn(2)-C6 fungal-type) is located at residues 65–93 (CYACQRGHLTCGDERPCQRCIKRGFQDAC). Composition is skewed to polar residues over residues 129-213 (NNVN…TPSA), 267-277 (PSDSGAQRGSI), and 361-379 (MMTTSSATFEDTTNSGAFN). Disordered stretches follow at residues 129–224 (NNVN…FNST), 264–297 (DTPPSDSGAQRGSIGQNGSGTFGLTGSSFSESPS), 353–399 (SPAS…STPQ), 533–567 (NHNVNTGGSSGLMTGSTSRGSYTPRPYSSEVYNSS), and 627–666 (GSNGEADAGLNGEATSNETNELNGSHTNGATTNGRGQRRW). 2 stretches are compositionally biased toward low complexity: residues 380-399 (SRQNVPVSQQRQQPVVSTPQ) and 543-553 (GLMTGSTSRGS). Polar residues predominate over residues 639 to 661 (EATSNETNELNGSHTNGATTNGR).

It belongs to the ERT1/acuK family.

Its subcellular location is the nucleus. Transcription factor which regulates nonfermentable carbon utilization. Activator of gluconeogenetic genes. This is Transcription activator of gluconeogenesis TRV_01442 from Trichophyton verrucosum (strain HKI 0517).